Reading from the N-terminus, the 501-residue chain is Ammonium transporter 2 member 2 (501 aa).

11 helical membrane passes run 35–55 (VAAT…YGSI), 64–84 (SAFM…LVGF), 140–160 (LVLF…GSLL), 174–194 (LWLL…GFLY), 203–223 (GGYV…YWVG), 238–258 (ILLM…FNGG), 274–294 (TNVS…IFFG), 298–318 (VIGA…GAGL), 322–342 (WSAM…MMIL), 356–376 (LAVF…TGLL), and 412–432 (FVTV…GLFI).

It belongs to the ammonia transporter channel (TC 1.A.11.2) family.

The protein localises to the membrane. Involved in ammonium transport. The chain is Ammonium transporter 2 member 2 (AMT2-2) from Oryza sativa subsp. japonica (Rice).